We begin with the raw amino-acid sequence, 137 residues long: Small ribosomal subunit protein uS12 (137 aa).

The tract at residues 1-57 is disordered; sequence MPTINQLVRKPRKSKVEKPKSPALNVGYNSHKKVQTNVSSPQKRGVATRVGTMTPRK. D102 is modified (3-methylthioaspartic acid).

Belongs to the universal ribosomal protein uS12 family. As to quaternary structure, part of the 30S ribosomal subunit. Contacts proteins S8 and S17. May interact with IF1 in the 30S initiation complex.

Functionally, with S4 and S5 plays an important role in translational accuracy. Its function is as follows. Interacts with and stabilizes bases of the 16S rRNA that are involved in tRNA selection in the A site and with the mRNA backbone. Located at the interface of the 30S and 50S subunits, it traverses the body of the 30S subunit contacting proteins on the other side and probably holding the rRNA structure together. The combined cluster of proteins S8, S12 and S17 appears to hold together the shoulder and platform of the 30S subunit. The sequence is that of Small ribosomal subunit protein uS12 from Streptococcus pneumoniae (strain Hungary19A-6).